The following is a 679-amino-acid chain: UvrABC system protein B (679 aa).

Residues 25–176 enclose the Helicase ATP-binding domain; sequence KGVNTGKEFQ…NLRSYLRSLV (152 aa). 38-45 is an ATP binding site; that stretch reads GATGTGKT. Positions 91 to 114 match the Beta-hairpin motif; sequence YYDYYQPEAYVPVSDTYIAKTASI. One can recognise a Helicase C-terminal domain in the interval 429–583; it reads QIEDLLSEIR…KKYNQVNGIT (155 aa). The region spanning 639-674 is the UVR domain; sequence PDLIEKLEIKMKDAAKELNFEEAANLRDRIKKLRQK.

The protein belongs to the UvrB family. In terms of assembly, forms a heterotetramer with UvrA during the search for lesions. Interacts with UvrC in an incision complex.

The protein localises to the cytoplasm. Functionally, the UvrABC repair system catalyzes the recognition and processing of DNA lesions. A damage recognition complex composed of 2 UvrA and 2 UvrB subunits scans DNA for abnormalities. Upon binding of the UvrA(2)B(2) complex to a putative damaged site, the DNA wraps around one UvrB monomer. DNA wrap is dependent on ATP binding by UvrB and probably causes local melting of the DNA helix, facilitating insertion of UvrB beta-hairpin between the DNA strands. Then UvrB probes one DNA strand for the presence of a lesion. If a lesion is found the UvrA subunits dissociate and the UvrB-DNA preincision complex is formed. This complex is subsequently bound by UvrC and the second UvrB is released. If no lesion is found, the DNA wraps around the other UvrB subunit that will check the other stand for damage. The sequence is that of UvrABC system protein B from Prochlorococcus marinus (strain MIT 9301).